Here is a 104-residue protein sequence, read N- to C-terminus: Protein enhancer of rudimentary (104 aa).

Position 18 is a phosphothreonine; by CK2 (threonine 18). Residue serine 24 is modified to Phosphoserine; by CK2.

Belongs to the E(R) family.

Its function is as follows. Acts as an enhancer of the rudimentary gene. Has a role in pyrimidine biosynthesis and the cell cycle. This Drosophila virilis (Fruit fly) protein is Protein enhancer of rudimentary (e(r)).